A 189-amino-acid chain; its full sequence is Proline-rich protein 29 (189 aa).

The segment at Ser-152–Leu-189 is disordered.

This is Proline-rich protein 29 (PRR29) from Homo sapiens (Human).